Reading from the N-terminus, the 663-residue chain is Translation factor GUF1 homolog, mitochondrial (663 aa).

A mitochondrion-targeting transit peptide spans 1–33 (MAGAAALRRSARRVVLPGAYALSRALQHPERLL). One can recognise a tr-type G domain in the interval 55-247 (ERVRNFSIIA…AVIERIPSPP (193 aa)). Residues 64–71 (AHVDHGKS), 140–144 (DTPGH), and 194–197 (NKID) contribute to the GTP site.

Belongs to the TRAFAC class translation factor GTPase superfamily. Classic translation factor GTPase family. LepA subfamily.

It localises to the mitochondrion inner membrane. The catalysed reaction is GTP + H2O = GDP + phosphate + H(+). Promotes mitochondrial protein synthesis. May act as a fidelity factor of the translation reaction, by catalyzing a one-codon backward translocation of tRNAs on improperly translocated ribosomes. Binds to mitochondrial ribosomes in a GTP-dependent manner. In Oryza sativa subsp. japonica (Rice), this protein is Translation factor GUF1 homolog, mitochondrial.